We begin with the raw amino-acid sequence, 331 residues long: MKIFAYGIRDDEKPSLEEWKAANPEIEVDYTQELLTPETAKLAEGSDSAVVYQQLDYTRETLTALANVGVTNLSLRNVGTDNIDFDAAREFNFNISNVPVYSPNAIAEHSMLQLSRLLRRTKALDAKIAKRDLRWAPTTGREMRMQTVGVIGTGHIGRVAINILKGFGAKVIAYDKYPNAELQAEGLYVDTLDELYAQADAISLYVPGVPENHHLINADAIAKMKDGVVIMNAARGNLMDIDAIIDGLNSGKISDFGMDVYENEVACSMKIGLVKNSPDAKIADLIARENVMITPHTAFYTTKAVLEMVHQSFDAAVAFAKGEKPAIAVEY.

Residues 155–156, aspartate 175, 206–207, asparagine 212, 233–235, and aspartate 259 contribute to the NAD(+) site; these read HI, VP, and AAR. The active site involves arginine 235. Glutamate 264 is a catalytic residue. Histidine 296 (proton donor) is an active-site residue.

Belongs to the D-isomer specific 2-hydroxyacid dehydrogenase family. In terms of assembly, homodimer.

The catalysed reaction is (R)-lactate + NAD(+) = pyruvate + NADH + H(+). This Leuconostoc mesenteroides subsp. cremoris protein is D-lactate dehydrogenase.